The following is a 697-amino-acid chain: uncharacterized protein (697 aa).

14 helical membrane passes run 65–85 (PVRN…VGIY), 106–126 (CTFR…LHNF), 131–151 (YRQS…EKAI), 163–183 (DAAL…DINE), 194–214 (LSSY…VPLG), 227–247 (TSAT…TASI), 286–306 (STNA…ANKD), 316–336 (PVTD…VLLE), 361–381 (SDEI…PEGV), 394–414 (MFEL…MAWE), 419–439 (ERML…EPYH), 450–470 (SVKR…YLAI), 487–507 (QGSQ…YKVW), and 558–578 (TSAG…HHRQ). The interval 246-321 (SINVRTSATT…NRFHPVTDIN (76 aa)) is disordered. Positions 251 to 298 (TSATTTESTNSNTNATTTESTNSSTNATTTASTNSSTNATTTESTNAS) are enriched in low complexity. The span at 299-321 (AKEDANKDGNAEDNRFHPVTDIN) shows a compositional bias: basic and acidic residues.

The protein resides in the membrane. This is an uncharacterized protein from Saccharomyces cerevisiae (strain ATCC 204508 / S288c) (Baker's yeast).